A 298-amino-acid polypeptide reads, in one-letter code: Ribosomal protein L11 methyltransferase (298 aa).

S-adenosyl-L-methionine-binding residues include Thr148, Gly169, Asp191, and Asn233.

This sequence belongs to the methyltransferase superfamily. PrmA family.

The protein resides in the cytoplasm. The catalysed reaction is L-lysyl-[protein] + 3 S-adenosyl-L-methionine = N(6),N(6),N(6)-trimethyl-L-lysyl-[protein] + 3 S-adenosyl-L-homocysteine + 3 H(+). Functionally, methylates ribosomal protein L11. The sequence is that of Ribosomal protein L11 methyltransferase from Marinobacter nauticus (strain ATCC 700491 / DSM 11845 / VT8) (Marinobacter aquaeolei).